The chain runs to 101 residues: NADH-quinone oxidoreductase subunit K (101 aa).

The next 3 membrane-spanning stretches (helical) occupy residues 4 to 24 (LGHL…GIFL), 30 to 50 (IVLL…FIAF), and 62 to 82 (FVFF…AILV).

This sequence belongs to the complex I subunit 4L family. As to quaternary structure, NDH-1 is composed of 14 different subunits. Subunits NuoA, H, J, K, L, M, N constitute the membrane sector of the complex.

The protein resides in the cell inner membrane. It carries out the reaction a quinone + NADH + 5 H(+)(in) = a quinol + NAD(+) + 4 H(+)(out). NDH-1 shuttles electrons from NADH, via FMN and iron-sulfur (Fe-S) centers, to quinones in the respiratory chain. The immediate electron acceptor for the enzyme in this species is believed to be ubiquinone. Couples the redox reaction to proton translocation (for every two electrons transferred, four hydrogen ions are translocated across the cytoplasmic membrane), and thus conserves the redox energy in a proton gradient. This Xylella fastidiosa (strain Temecula1 / ATCC 700964) protein is NADH-quinone oxidoreductase subunit K.